Reading from the N-terminus, the 86-residue chain is CRISPR-associated endoribonuclease Cas2 (86 aa).

Position 8 (Asp-8) interacts with Mg(2+).

The protein belongs to the CRISPR-associated endoribonuclease Cas2 protein family. Homodimer, forms a heterotetramer with a Cas1 homodimer. It depends on Mg(2+) as a cofactor.

In terms of biological role, CRISPR (clustered regularly interspaced short palindromic repeat), is an adaptive immune system that provides protection against mobile genetic elements (viruses, transposable elements and conjugative plasmids). CRISPR clusters contain sequences complementary to antecedent mobile elements and target invading nucleic acids. CRISPR clusters are transcribed and processed into CRISPR RNA (crRNA). Functions as a ssRNA-specific endoribonuclease. Involved in the integration of spacer DNA into the CRISPR cassette. Plasmid targeted by CRISPR locus P1 transform wild-type cells very poorly. The chain is CRISPR-associated endoribonuclease Cas2 from Haloferax volcanii (strain ATCC 29605 / DSM 3757 / JCM 8879 / NBRC 14742 / NCIMB 2012 / VKM B-1768 / DS2) (Halobacterium volcanii).